Reading from the N-terminus, the 878-residue chain is Vacuolar membrane protease (878 aa).

The Cytoplasmic portion of the chain corresponds to 1 to 16 (MASLRLPRANPLAFTR). Residues 17-37 (WPVTVITAIVYLALLIPLLVV) form a helical membrane-spanning segment. Topologically, residues 38-390 (HHVVPSAPSS…STFVLFQLHT (353 aa)) are vacuolar. Asparagine 53 and asparagine 119 each carry an N-linked (GlcNAc...) asparagine glycan. The Zn(2+) site is built by histidine 174 and aspartate 186. The Proton acceptor role is filled by glutamate 220. The Zn(2+) site is built by glutamate 221, glutamate 246, and histidine 319. Residues 391-411 (LFALLVTLLIVGPLTLLFTSI) form a helical membrane-spanning segment. Topologically, residues 412-442 (ALTKADKMYLFRSSAKSEDRLDVVPLQGLRG) are cytoplasmic. A helical membrane pass occupies residues 443–463 (FFRFPFLFGIPTVVTVGLAYL). Residues 464-473 (VTKVNPYIIH) are Vacuolar-facing. A helical transmembrane segment spans residues 474–494 (SSAYAVWSMMVAAWVFLAWFV). Over 495–508 (SRVADFARPSAFHR) the chain is Cytoplasmic. The chain crosses the membrane as a helical span at residues 509 to 529 (IYTLTWMYVLSWVSAVIATVY). At 530–533 (ANQR) the chain is on the vacuolar side. A helical transmembrane segment spans residues 534-554 (GLAGGYFIFFFHAGIFLATWI). Residues 555–659 (SYLELFALPS…ALPKWTWGLQ (105 aa)) lie on the Cytoplasmic side of the membrane. Residues 577–590 (GRASGHGSRRGTTS) show a composition bias toward low complexity. The tract at residues 577–611 (GRASGHGSRRGTTSGEDDGEEAEEEPTESTSLLGS) is disordered. The segment covering 591–603 (GEDDGEEAEEEPT) has biased composition (acidic residues). Residues 660–680 (LLLTAPITLIMVGPLALLTIS) form a helical membrane-spanning segment. Topologically, residues 681 to 693 (AISQTGQDGGHPL) are vacuolar. A helical membrane pass occupies residues 694–714 (FAYVAIAIFTTIMLTPLLPFI). At 715–721 (HRYTYHV) the chain is on the cytoplasmic side. A helical transmembrane segment spans residues 722–742 (PLFLLAVFLGTLIYNLVAFPF). Topologically, residues 743–878 (SDSNRLKLYY…RRAFEIGNDD (136 aa)) are vacuolar.

It belongs to the peptidase M28 family. Zn(2+) serves as cofactor.

It localises to the vacuole membrane. May be involved in vacuolar sorting and osmoregulation. The polypeptide is Vacuolar membrane protease (Aspergillus flavus (strain ATCC 200026 / FGSC A1120 / IAM 13836 / NRRL 3357 / JCM 12722 / SRRC 167)).